A 137-amino-acid chain; its full sequence is Small ribosomal subunit protein uS12 (137 aa).

The disordered stretch occupies residues 1–57; that stretch reads MPTINQLVRKPRQSKSKKSDSPVLNRGFNSKKKQFTNLNSPQKRGVCTRVGTMTPRK. Aspartate 102 is subject to 3-methylthioaspartic acid. A disordered region spans residues 118-137; it reads SGVDGRRQGRSLYGTKKPKN.

It belongs to the universal ribosomal protein uS12 family. Part of the 30S ribosomal subunit. Contacts proteins S8 and S17. May interact with IF1 in the 30S initiation complex.

With S4 and S5 plays an important role in translational accuracy. Functionally, interacts with and stabilizes bases of the 16S rRNA that are involved in tRNA selection in the A site and with the mRNA backbone. Located at the interface of the 30S and 50S subunits, it traverses the body of the 30S subunit contacting proteins on the other side and probably holding the rRNA structure together. The combined cluster of proteins S8, S12 and S17 appears to hold together the shoulder and platform of the 30S subunit. This is Small ribosomal subunit protein uS12 from Staphylococcus haemolyticus (strain JCSC1435).